A 551-amino-acid chain; its full sequence is Cytochrome c oxidase subunit 1 homolog (551 aa).

The next 3 membrane-spanning stretches (helical) occupy residues 14–34 (GELG…VVAA), 40–60 (EYAF…FVIG), and 88–108 (VGTL…VIIA). His-132 contributes to the heme b binding site. 8 helical membrane passes run 133-153 (TSAV…FYVV), 169-189 (FVVL…LLGI), 202-222 (ADLW…GTVL), 229-249 (IYVA…LHLG), 280-300 (GHNA…YYFI), 313-333 (LSIV…PHHL), 345-365 (LGMT…INGL), and 383-403 (MMVV…MMSV). Cu cation-binding residues include His-281, His-331, and His-332. 2 residues coordinate heme b: His-419 and His-421. 3 helical membrane-spanning segments follow: residues 424 to 444 (ALGW…PWLW), 459 to 479 (FWVS…AGIL), and 513 to 533 (IGGI…FMTI).

The protein belongs to the heme-copper respiratory oxidase family. Requires Cu(2+) as cofactor. Heme b serves as cofactor.

It localises to the cell membrane. The catalysed reaction is 4 Fe(II)-[cytochrome c] + O2 + 8 H(+)(in) = 4 Fe(III)-[cytochrome c] + 2 H2O + 4 H(+)(out). The protein operates within energy metabolism; oxidative phosphorylation. In terms of biological role, cytochrome c oxidase is the component of the respiratory chain that catalyzes the reduction of oxygen to water. Subunits 1-3 form the functional core of the enzyme complex. Co I is the catalytic subunit of the enzyme. Electrons originating in cytochrome c or a quinol are transferred to the bimetallic center formed by a high-spin heme and copper B. In Azorhizobium caulinodans (strain ATCC 43989 / DSM 5975 / JCM 20966 / LMG 6465 / NBRC 14845 / NCIMB 13405 / ORS 571), this protein is Cytochrome c oxidase subunit 1 homolog (fixN).